Consider the following 122-residue polypeptide: Large ribosomal subunit protein uL14c (122 aa).

It belongs to the universal ribosomal protein uL14 family. In terms of assembly, part of the 50S ribosomal subunit.

Its subcellular location is the plastid. The protein localises to the chloroplast. Binds to 23S rRNA. This Acorus calamus (Sweet flag) protein is Large ribosomal subunit protein uL14c.